Here is a 94-residue protein sequence, read N- to C-terminus: Aspartyl/glutamyl-tRNA(Asn/Gln) amidotransferase subunit C (94 aa).

Belongs to the GatC family. As to quaternary structure, heterotrimer of A, B and C subunits.

It carries out the reaction L-glutamyl-tRNA(Gln) + L-glutamine + ATP + H2O = L-glutaminyl-tRNA(Gln) + L-glutamate + ADP + phosphate + H(+). The enzyme catalyses L-aspartyl-tRNA(Asn) + L-glutamine + ATP + H2O = L-asparaginyl-tRNA(Asn) + L-glutamate + ADP + phosphate + 2 H(+). Allows the formation of correctly charged Asn-tRNA(Asn) or Gln-tRNA(Gln) through the transamidation of misacylated Asp-tRNA(Asn) or Glu-tRNA(Gln) in organisms which lack either or both of asparaginyl-tRNA or glutaminyl-tRNA synthetases. The reaction takes place in the presence of glutamine and ATP through an activated phospho-Asp-tRNA(Asn) or phospho-Glu-tRNA(Gln). The polypeptide is Aspartyl/glutamyl-tRNA(Asn/Gln) amidotransferase subunit C (Nitratidesulfovibrio vulgaris (strain ATCC 29579 / DSM 644 / CCUG 34227 / NCIMB 8303 / VKM B-1760 / Hildenborough) (Desulfovibrio vulgaris)).